The following is a 313-amino-acid chain: Protein PALE CRESS, chloroplastic (313 aa).

The N-terminal 22 residues, 1 to 22, are a transit peptide targeting the chloroplast; that stretch reads MAATSLVLTCASPLFSSPRVIS.

In terms of tissue distribution, expressed in green tissues, including leaves. Accumulates in chloroplasts of mature stomatal guard cells.

The protein localises to the plastid. It localises to the chloroplast. It is found in the chromoplast. Its subcellular location is the etioplast. The protein resides in the amyloplast. Required for the differentiation of chloroplast from proplastids or etioplasts, probably by modulating some chloroplast-encoded genes expression and mRNA maturation. Involved in leaf-cells differentiation. The chain is Protein PALE CRESS, chloroplastic (PAC) from Arabidopsis thaliana (Mouse-ear cress).